Reading from the N-terminus, the 613-residue chain is Ribosome-associated molecular chaperone SSB1 (613 aa).

Ala-2 is modified (N-acetylalanine). Positions 2 to 391 (AEGVFQGAIG…ILTGQSTSDE (390 aa)) are nucleotide binding domain (NBD). 16–18 (TTY) serves as a coordination point for ATP. Thr-47 carries the phosphothreonine modification. ATP-binding positions include Lys-73, 205–207 (GGT), 271–278 (ERAKRTLS), and Gly-342. The interval 392–402 (TKDLLLLDVAP) is inter-domain linker. Positions 403–613 (LSLGVGMQGD…RVVTKAMSSR (211 aa)) are substrate binding domain (SBD). A Contributes to ribosome binding motif is present at residues 428 to 430 (KRR). Thr-431 bears the Phosphothreonine mark. Residues 516-612 (SEEIEKMVNQ…KRVVTKAMSS (97 aa)) are lid domain (SBDalpha). A Nuclear export signal motif is present at residues 574 to 582 (IEAALSDAL). The tract at residues 601-613 (GLKRVVTKAMSSR) is required for interaction with ribosomes.

Belongs to the heat shock protein 70 family. Ssb-type Hsp70 subfamily. Binds to ribosomes. Binds close to the ribosomal tunnel exit via contacts with both ribosomal proteins RPL35, RPL39 and RPL19, and rRNA. Directly interacts with nascent polypeptides. This interaction is dependent on the ribosome-associated complex (RAC). Interacts with SSE1. Interacts with FES1. Interacts with NAP1.

It localises to the cytoplasm. It catalyses the reaction ATP + H2O = ADP + phosphate + H(+). Ribosome-bound, Hsp70-type chaperone that assists in the cotranslational folding of newly synthesized proteins in the cytosol. Stimulates folding by interacting with nascent chains, binding to short, largely hydrophobic sequences exposed by unfolded proteins, thereby stabilizing longer, more slowly translated, and aggregation-prone nascent polypeptides and domains that cannot fold stably until fully synthesized. The Hsp70-protein substrate interaction depends on ATP-binding and on allosteric regulation between the NBD and the SBD. The ATP-bound state is characterized by a fast exchange rate of substrate (low affinity state), while in the ADP-bound state exchange is much slower (high affinity state). During the Hsp70 cycle, the chaperone switches between the ATP-bound state (open conformation) and the ADP-bound state (closed conformation) by major conformational rearrangements involving mainly the lid domain. Ssb cooperates with a specific Hsp40/Hsp70 co-chaperone termed the ribosome-associated complex (RAC), which stimulates the ATPase activity of the ribosome-associated pool of Ssbs and switches it to the high affinity substrate binding state. Hsp110 chaperone SSE1 and FES1 act as nucleotide exchange factors that cause substrate release. The polypeptide is Ribosome-associated molecular chaperone SSB1 (Saccharomyces cerevisiae (strain ATCC 204508 / S288c) (Baker's yeast)).